The primary structure comprises 493 residues: Glycerol kinase (493 aa).

Thr11 serves as a coordination point for ADP. ATP-binding residues include Thr11, Thr12, and Ser13. Thr11 contributes to the sn-glycerol 3-phosphate binding site. Arg15 is an ADP binding site. 4 residues coordinate sn-glycerol 3-phosphate: Arg80, Glu81, Tyr132, and Asp241. Positions 80, 81, 132, 241, and 242 each coordinate glycerol. Residues Thr263 and Gly306 each contribute to the ADP site. Thr263, Gly306, Gln310, and Gly408 together coordinate ATP. Gly408 contacts ADP.

The protein belongs to the FGGY kinase family.

It carries out the reaction glycerol + ATP = sn-glycerol 3-phosphate + ADP + H(+). The protein operates within polyol metabolism; glycerol degradation via glycerol kinase pathway; sn-glycerol 3-phosphate from glycerol: step 1/1. Its activity is regulated as follows. Inhibited by fructose 1,6-bisphosphate (FBP). Key enzyme in the regulation of glycerol uptake and metabolism. Catalyzes the phosphorylation of glycerol to yield sn-glycerol 3-phosphate. This chain is Glycerol kinase, found in Cereibacter sphaeroides (strain KD131 / KCTC 12085) (Rhodobacter sphaeroides).